The chain runs to 139 residues: Chorion protein S16 (139 aa).

Residues 1 to 21 (MSVNYMRLLCLMACCFSVCLA) form the signal peptide.

Belongs to the chorion protein S16 family.

Its subcellular location is the secreted. Its function is as follows. Chorion membrane (egg shell) protein; plays a role in protecting the egg from the environment. The polypeptide is Chorion protein S16 (Cp16) (Drosophila virilis (Fruit fly)).